Reading from the N-terminus, the 147-residue chain is MRLLLLNGPNINLLGQREPGLYGHQTLSDIELRLRDRASEAEVQLETFQSNFEGALVERVHQAMGSVDGILINAGAYTHTSIALRDALLGVAIPFVEVHLSNIHARESFRHHSHLADRALGVVCGFGAFSYDMAFDGLVNHLRGVEA.

Residue Tyr22 is the Proton acceptor of the active site. Residues Asn73, His79, and Asp86 each contribute to the substrate site. Residue His99 is the Proton donor of the active site. Residues 100–101 (LS) and Arg110 contribute to the substrate site.

The protein belongs to the type-II 3-dehydroquinase family. As to quaternary structure, homododecamer.

It catalyses the reaction 3-dehydroquinate = 3-dehydroshikimate + H2O. It participates in metabolic intermediate biosynthesis; chorismate biosynthesis; chorismate from D-erythrose 4-phosphate and phosphoenolpyruvate: step 3/7. Catalyzes a trans-dehydration via an enolate intermediate. This Synechococcus sp. (strain WH7803) protein is 3-dehydroquinate dehydratase.